The sequence spans 905 residues: MIDKYSSNLVPVNIEDEMKVSYLDYAMSVIVSRAIPDVRDGLKPVHRRIIYSMYEAGNHASKPYRKSARIVGDVMGKYHPHGDSAIYDSLVRMAQDFSLRLPLVDGQGNFGSMDGDAAAAMRYTESRMAKVAHKLVEDIDKGTVSFNINYDGSEEEPSVLPAMFPNLLVNGSGGIAVGMATNIPPHNLGEIIDACCLYIDNHDIEILDLLEVVKGPDFPTGSMILGISGIRSAYLTGRGSIIMRGKAEIENVGNSRQAIIITEIPYMVNKARLVEKIAEMVKEKRIEGISDLRDESNKNGIRIFIELKKDVVAEVVLNQIYACTQLQTNFGVIMLALKDGLPKVMNLKEVIAAFVSFREVVITNRTIYLLNKARDRAHILLGLTIAISNIDEIIYIIKASNDTNLAKQELMARQWEVLDILPLIKLVDDKVILNERGTLSFTEVQAKAILEMKLQRLTAMEKEKLEQDLKHLATDIAEYLNILASRTRLLEILKEELIKVKEEFASPRLTSIEFGEFDQDIEDLIQREEMVVTVTLGGYIKRVPLSSYRSQKRGGKGRSGLSMRDEDITTQVFVGSTHTPMLFFSNIGKVYSLKLYKLPLSNPQGKGRPMVNILSLQENEHITNIMPLPENQDEWDHLNIMFATAKGNIRRSDLLDFKKIQSNGKIAIRLDEDDKLIDVKPCKEDEHILLATKAGKALRFPVESLRIIKSRISDGVRGMKLAKEDSVISMTVLKGINSTKEDRDAYLTVPWEKRLEIAKGEEFNLEELGVNLNADSILEMANSEEFILTVTENGFGKRSSAYGYRITDRGGSGIINMDINDKTGLVVGVMPVKMDDELMLITNSGKLIRCKLESVRITGRNTSGVILFKLDDDEKVVSVSLIAETSESEEASELAEEGLENDVKV.

Residues 35-524 (IPDVRDGLKP…GEFDQDIEDL (490 aa)) enclose the Topo IIA-type catalytic domain. The active-site O-(5'-phospho-DNA)-tyrosine intermediate is the Y123. A GyrA-box motif is present at residues 551–557 (QKRGGKG).

This sequence belongs to the type II topoisomerase GyrA/ParC subunit family. As to quaternary structure, heterotetramer, composed of two GyrA and two GyrB chains. In the heterotetramer, GyrA contains the active site tyrosine that forms a transient covalent intermediate with DNA, while GyrB binds cofactors and catalyzes ATP hydrolysis.

The protein resides in the cytoplasm. It catalyses the reaction ATP-dependent breakage, passage and rejoining of double-stranded DNA.. A type II topoisomerase that negatively supercoils closed circular double-stranded (ds) DNA in an ATP-dependent manner to modulate DNA topology and maintain chromosomes in an underwound state. Negative supercoiling favors strand separation, and DNA replication, transcription, recombination and repair, all of which involve strand separation. Also able to catalyze the interconversion of other topological isomers of dsDNA rings, including catenanes and knotted rings. Type II topoisomerases break and join 2 DNA strands simultaneously in an ATP-dependent manner. This chain is DNA gyrase subunit A, found in Rickettsia prowazekii (strain Madrid E).